The chain runs to 411 residues: UPF0761 membrane protein PLES_43641 (411 aa).

6 consecutive transmembrane segments (helical) span residues 36–56 (LFAV…IPAF), 92–112 (HLTW…LVTI), 132–152 (FLLY…GFAV), 174–194 (LLGL…YSAV), 207–229 (GGVF…VSLF), and 244–264 (IFLL…VLVC).

This sequence belongs to the UPF0761 family.

Its subcellular location is the cell inner membrane. This chain is UPF0761 membrane protein PLES_43641, found in Pseudomonas aeruginosa (strain LESB58).